Here is a 462-residue protein sequence, read N- to C-terminus: Putative zinc metalloprotease RSc1411 (462 aa).

A helical transmembrane segment spans residues 1-21 (MLTVLAFVFAIAVLIVVHELG). H18 provides a ligand contact to Zn(2+). Residue E19 is part of the active site. H22 contributes to the Zn(2+) binding site. A helical transmembrane segment spans residues 102-124 (FAIVAAGPVFNFLLAIALYALLA). Residues 201–283 (TVRLRELPSA…MPEQNASIDI (83 aa)) form the PDZ domain. 2 helical membrane passes run 386 to 406 (FVAFLALISVSLGVLNLLPVP) and 430 to 450 (WQAVLQKIGIACILLLTSLAL).

The protein belongs to the peptidase M50B family. Zn(2+) serves as cofactor.

It localises to the cell inner membrane. This chain is Putative zinc metalloprotease RSc1411, found in Ralstonia nicotianae (strain ATCC BAA-1114 / GMI1000) (Ralstonia solanacearum).